The chain runs to 270 residues: tRNA pseudouridine synthase A (270 aa).

Asp51 (nucleophile) is an active-site residue. Tyr109 lines the substrate pocket.

This sequence belongs to the tRNA pseudouridine synthase TruA family. Homodimer.

The catalysed reaction is uridine(38/39/40) in tRNA = pseudouridine(38/39/40) in tRNA. Functionally, formation of pseudouridine at positions 38, 39 and 40 in the anticodon stem and loop of transfer RNAs. The sequence is that of tRNA pseudouridine synthase A from Variovorax paradoxus (strain S110).